The following is a 227-amino-acid chain: Small ribosomal subunit protein uS3 (227 aa).

The KH type-2 domain maps to 38-106 (LRKFIKDRFY…NVNINIQEIR (69 aa)).

The protein belongs to the universal ribosomal protein uS3 family. In terms of assembly, part of the 30S ribosomal subunit. Forms a tight complex with proteins S10 and S14.

Binds the lower part of the 30S subunit head. Binds mRNA in the 70S ribosome, positioning it for translation. This Syntrophomonas wolfei subsp. wolfei (strain DSM 2245B / Goettingen) protein is Small ribosomal subunit protein uS3.